A 223-amino-acid polypeptide reads, in one-letter code: Triosephosphate isomerase (223 aa).

6-8 contributes to the substrate binding site; sequence NLK. His86 acts as the Electrophile in catalysis. The active-site Proton acceptor is Glu151. Substrate contacts are provided by Gly157 and Ser187.

This sequence belongs to the triosephosphate isomerase family. As to quaternary structure, homodimer.

It is found in the cytoplasm. It carries out the reaction D-glyceraldehyde 3-phosphate = dihydroxyacetone phosphate. It functions in the pathway carbohydrate biosynthesis; gluconeogenesis. Its pathway is carbohydrate degradation; glycolysis; D-glyceraldehyde 3-phosphate from glycerone phosphate: step 1/1. Its function is as follows. Involved in the gluconeogenesis. Catalyzes stereospecifically the conversion of dihydroxyacetone phosphate (DHAP) to D-glyceraldehyde-3-phosphate (G3P). This is Triosephosphate isomerase from Campylobacter jejuni subsp. jejuni serotype O:2 (strain ATCC 700819 / NCTC 11168).